The primary structure comprises 399 residues: Serine/threonine-protein kinase PKZ1 (399 aa).

The disordered stretch occupies residues 30 to 50 (PMQCAYQTQSHSNPEGAKRGR). Positions 92-371 (WQLFDQIGAG…ADQMLQHPWM (280 aa)) constitute a Protein kinase domain. Residues 98-106 (IGAGAFGVV) and Lys-121 each bind ATP. The Proton acceptor role is filled by Asp-219.

Belongs to the protein kinase superfamily. CAMK Ser/Thr protein kinase family.

It carries out the reaction L-seryl-[protein] + ATP = O-phospho-L-seryl-[protein] + ADP + H(+). The enzyme catalyses L-threonyl-[protein] + ATP = O-phospho-L-threonyl-[protein] + ADP + H(+). May regulate an early stage of the zoospore pathway. The chain is Serine/threonine-protein kinase PKZ1 from Phytophthora infestans (strain T30-4) (Potato late blight agent).